A 236-amino-acid polypeptide reads, in one-letter code: Transmembrane protein 70 homolog, mitochondrial (236 aa).

Residues 1–64 (MLGLRAMLPK…WLSVKSTKTE (64 aa)) constitute a mitochondrion transit peptide. The next 2 membrane-spanning stretches (helical) occupy residues 83-103 (MVKF…PILL) and 116-136 (VFLC…LHFI).

Belongs to the TMEM70 family. In terms of assembly, associates with mitochondrial complex I assembly intermediates during its biogenesis.

It localises to the mitochondrion membrane. In terms of biological role, scaffold protein that participates in the c-ring assembly of mitochondrial ATP synthase (F(1)F(0) ATP synthase or complex V). Also binds the mitochondrial proton-transporting ATP synthase complex I and may play a role in the stability of its membrane-bound subassemblies. The chain is Transmembrane protein 70 homolog, mitochondrial from Drosophila melanogaster (Fruit fly).